Consider the following 414-residue polypeptide: 3-aminobutyryl-CoA aminotransferase (414 aa).

At Lys261 the chain carries N6-(pyridoxal phosphate)lysine.

This sequence belongs to the class-III pyridoxal-phosphate-dependent aminotransferase family. Homodimer. Requires pyridoxal 5'-phosphate as cofactor.

The catalysed reaction is (3S)-3-aminobutanoyl-CoA + 2-oxoglutarate = acetoacetyl-CoA + L-glutamate. Its pathway is amino-acid degradation; L-lysine degradation via acetate pathway. Its function is as follows. 3-aminobutyryl-CoA aminotransferase that acts specifically on coenzyme A (CoA) esters and catalyzes the conversion of 3-aminobutyryl-CoA into acetoacetyl-CoA in an alternative pathway of lysine fermentation. This is 3-aminobutyryl-CoA aminotransferase (kat) from Cloacimonas acidaminovorans (strain Evry).